A 430-amino-acid chain; its full sequence is Glutamate-1-semialdehyde 2,1-aminomutase (430 aa).

Lysine 265 carries the post-translational modification N6-(pyridoxal phosphate)lysine.

The protein belongs to the class-III pyridoxal-phosphate-dependent aminotransferase family. HemL subfamily. In terms of assembly, homodimer. Requires pyridoxal 5'-phosphate as cofactor.

The protein localises to the cytoplasm. The enzyme catalyses (S)-4-amino-5-oxopentanoate = 5-aminolevulinate. It functions in the pathway porphyrin-containing compound metabolism; protoporphyrin-IX biosynthesis; 5-aminolevulinate from L-glutamyl-tRNA(Glu): step 2/2. The polypeptide is Glutamate-1-semialdehyde 2,1-aminomutase (Shewanella baltica (strain OS223)).